The sequence spans 505 residues: Aspartyl/glutamyl-tRNA(Asn/Gln) amidotransferase subunit B (505 aa).

Residues 220 to 241 (NVSLRPRPAPGDPDAPFGTRSE) are disordered.

The protein belongs to the GatB/GatE family. GatB subfamily. As to quaternary structure, heterotrimer of A, B and C subunits.

The catalysed reaction is L-glutamyl-tRNA(Gln) + L-glutamine + ATP + H2O = L-glutaminyl-tRNA(Gln) + L-glutamate + ADP + phosphate + H(+). It catalyses the reaction L-aspartyl-tRNA(Asn) + L-glutamine + ATP + H2O = L-asparaginyl-tRNA(Asn) + L-glutamate + ADP + phosphate + 2 H(+). Allows the formation of correctly charged Asn-tRNA(Asn) or Gln-tRNA(Gln) through the transamidation of misacylated Asp-tRNA(Asn) or Glu-tRNA(Gln) in organisms which lack either or both of asparaginyl-tRNA or glutaminyl-tRNA synthetases. The reaction takes place in the presence of glutamine and ATP through an activated phospho-Asp-tRNA(Asn) or phospho-Glu-tRNA(Gln). This chain is Aspartyl/glutamyl-tRNA(Asn/Gln) amidotransferase subunit B, found in Frankia casuarinae (strain DSM 45818 / CECT 9043 / HFP020203 / CcI3).